Reading from the N-terminus, the 173-residue chain is ATP synthase subunit b (173 aa).

A helical membrane pass occupies residues 15-35 (GVEWGTVIVQVLTFIVLLALL).

This sequence belongs to the ATPase B chain family. F-type ATPases have 2 components, F(1) - the catalytic core - and F(0) - the membrane proton channel. F(1) has five subunits: alpha(3), beta(3), gamma(1), delta(1), epsilon(1). F(0) has three main subunits: a(1), b(2) and c(10-14). The alpha and beta chains form an alternating ring which encloses part of the gamma chain. F(1) is attached to F(0) by a central stalk formed by the gamma and epsilon chains, while a peripheral stalk is formed by the delta and b chains.

Its subcellular location is the cell membrane. Its function is as follows. F(1)F(0) ATP synthase produces ATP from ADP in the presence of a proton or sodium gradient. F-type ATPases consist of two structural domains, F(1) containing the extramembraneous catalytic core and F(0) containing the membrane proton channel, linked together by a central stalk and a peripheral stalk. During catalysis, ATP synthesis in the catalytic domain of F(1) is coupled via a rotary mechanism of the central stalk subunits to proton translocation. In terms of biological role, component of the F(0) channel, it forms part of the peripheral stalk, linking F(1) to F(0). The polypeptide is ATP synthase subunit b (Staphylococcus aureus (strain MSSA476)).